Consider the following 249-residue polypeptide: tRNA (guanine-N(1)-)-methyltransferase (249 aa).

S-adenosyl-L-methionine-binding positions include glycine 113 and 133–138 (IGDFVL).

Belongs to the RNA methyltransferase TrmD family. In terms of assembly, homodimer.

It localises to the cytoplasm. It carries out the reaction guanosine(37) in tRNA + S-adenosyl-L-methionine = N(1)-methylguanosine(37) in tRNA + S-adenosyl-L-homocysteine + H(+). Its function is as follows. Specifically methylates guanosine-37 in various tRNAs. This chain is tRNA (guanine-N(1)-)-methyltransferase, found in Aliivibrio fischeri (strain ATCC 700601 / ES114) (Vibrio fischeri).